A 299-amino-acid polypeptide reads, in one-letter code: Acetylglutamate kinase (299 aa).

Residues 72-73, Arg94, and Asn196 each bind substrate; that span reads GG.

The protein belongs to the acetylglutamate kinase family. ArgB subfamily.

It is found in the cytoplasm. The enzyme catalyses N-acetyl-L-glutamate + ATP = N-acetyl-L-glutamyl 5-phosphate + ADP. It participates in amino-acid biosynthesis; L-arginine biosynthesis; N(2)-acetyl-L-ornithine from L-glutamate: step 2/4. Catalyzes the ATP-dependent phosphorylation of N-acetyl-L-glutamate. The polypeptide is Acetylglutamate kinase (Burkholderia cenocepacia (strain ATCC BAA-245 / DSM 16553 / LMG 16656 / NCTC 13227 / J2315 / CF5610) (Burkholderia cepacia (strain J2315))).